The sequence spans 250 residues: Triosephosphate isomerase (250 aa).

Asn9–Lys11 provides a ligand contact to substrate. His94 acts as the Electrophile in catalysis. Catalysis depends on Glu166, which acts as the Proton acceptor. Substrate contacts are provided by residues Gly172, Ser211, and Gly232 to Gly233.

This sequence belongs to the triosephosphate isomerase family. As to quaternary structure, homodimer.

The protein localises to the cytoplasm. The enzyme catalyses D-glyceraldehyde 3-phosphate = dihydroxyacetone phosphate. It functions in the pathway carbohydrate biosynthesis; gluconeogenesis. The protein operates within carbohydrate degradation; glycolysis; D-glyceraldehyde 3-phosphate from glycerone phosphate: step 1/1. In terms of biological role, involved in the gluconeogenesis. Catalyzes stereospecifically the conversion of dihydroxyacetone phosphate (DHAP) to D-glyceraldehyde-3-phosphate (G3P). This Methylococcus capsulatus (strain ATCC 33009 / NCIMB 11132 / Bath) protein is Triosephosphate isomerase.